Reading from the N-terminus, the 168-residue chain is Small ribosomal subunit protein uS5 (168 aa).

The region spanning 14–77 is the S5 DRBM domain; the sequence is FEERVVSINR…EAAKKNLITV (64 aa).

This sequence belongs to the universal ribosomal protein uS5 family. Part of the 30S ribosomal subunit. Contacts proteins S4 and S8.

Functionally, with S4 and S12 plays an important role in translational accuracy. In terms of biological role, located at the back of the 30S subunit body where it stabilizes the conformation of the head with respect to the body. This Lactococcus lactis subsp. cremoris (strain MG1363) protein is Small ribosomal subunit protein uS5.